Consider the following 1003-residue polypeptide: Glycine--tRNA ligase (1003 aa).

The segment at 1–310 is glycine--tRNA ligase alpha subunit; the sequence is MSSQPLTLQT…VTPKKIPTIC (310 aa). Residues 311–1003 are glycine--tRNA ligase beta subunit; it reads QPEDFLLEIG…CFGFYAWGVL (693 aa).

The protein belongs to the class-II aminoacyl-tRNA synthetase family.

The protein localises to the cytoplasm. It carries out the reaction tRNA(Gly) + glycine + ATP = glycyl-tRNA(Gly) + AMP + diphosphate. The sequence is that of Glycine--tRNA ligase (glyQS) from Chlamydia trachomatis serovar D (strain ATCC VR-885 / DSM 19411 / UW-3/Cx).